Reading from the N-terminus, the 143-residue chain is Fido domain-containing protein DDB_G0283145 (143 aa).

The Fido domain maps to 1 to 128 (MKGIIVSDGV…TSHLALIILN (128 aa)). A helical membrane pass occupies residues 49–69 (SSPYAVAAWLLHAFVSIHPFI).

The protein localises to the membrane. The sequence is that of Fido domain-containing protein DDB_G0283145 from Dictyostelium discoideum (Social amoeba).